The following is a 647-amino-acid chain: Calmodulin-binding protein 60 B (647 aa).

The segment covering 1–10 has biased composition (polar residues); the sequence is MMDSGNNNMN. A disordered region spans residues 1–26; that stretch reads MMDSGNNNMNRAKRNLDGNDDDQPER. The calmodulin-binding stretch occupies residues 8–85; it reads NMNRAKRNLD…TGSSGSSPKR (78 aa). A Nuclear localization signal motif is present at residues 12–19; that stretch reads AKRNLDGN. Residues 155–278 are DNA-binding; that stretch reads EDDEDWTQEE…AFHKKLTAEG (124 aa).

It belongs to the plant ACBP60 protein family. As to quaternary structure, interacts with calmodulin (CaM). In terms of tissue distribution, expressed in leaves, stems, flowers, developing seeds and root.

The protein resides in the nucleus. Functionally, transcription activator that binds DNA in a sequence-specific manner, likely 5'-GAAATTTTGG-3', to promote the expression of target genes. The sequence is that of Calmodulin-binding protein 60 B from Arabidopsis thaliana (Mouse-ear cress).